Consider the following 239-residue polypeptide: Lactate utilization protein A (239 aa).

It belongs to the LutA/YkgE family.

In terms of biological role, is involved in L-lactate degradation and allows cells to grow with lactate as the sole carbon source. The protein is Lactate utilization protein A of Shouchella clausii (strain KSM-K16) (Alkalihalobacillus clausii).